We begin with the raw amino-acid sequence, 91 residues long: MSFFTMCVLAAGIGMALGTLGTGIGQGLAVKSAVEGVSRNPGASGKILTTMMIGLAMIESLAIYALVVCLIILFANPYKEIALELAKTVAK.

Transmembrane regions (helical) follow at residues 4 to 24 and 53 to 73; these read FTMCVLAAGIGMALGTLGTGI and IGLAMIESLAIYALVVCLIIL.

This sequence belongs to the ATPase C chain family. As to quaternary structure, F-type ATPases have 2 components, F(1) - the catalytic core - and F(0) - the membrane proton channel. F(1) has five subunits: alpha(3), beta(3), gamma(1), delta(1), epsilon(1). F(0) has three main subunits: a(1), b(2) and c(10-14). The alpha and beta chains form an alternating ring which encloses part of the gamma chain. F(1) is attached to F(0) by a central stalk formed by the gamma and epsilon chains, while a peripheral stalk is formed by the delta and b chains.

The protein localises to the cell inner membrane. Its function is as follows. F(1)F(0) ATP synthase produces ATP from ADP in the presence of a proton or sodium gradient. F-type ATPases consist of two structural domains, F(1) containing the extramembraneous catalytic core and F(0) containing the membrane proton channel, linked together by a central stalk and a peripheral stalk. During catalysis, ATP synthesis in the catalytic domain of F(1) is coupled via a rotary mechanism of the central stalk subunits to proton translocation. In terms of biological role, key component of the F(0) channel; it plays a direct role in translocation across the membrane. A homomeric c-ring of between 10-14 subunits forms the central stalk rotor element with the F(1) delta and epsilon subunits. The polypeptide is ATP synthase subunit c (Geotalea uraniireducens (strain Rf4) (Geobacter uraniireducens)).